We begin with the raw amino-acid sequence, 272 residues long: uncharacterized protein (272 aa).

Residues 12–34 (FITGAARGLGRAHAVRLAADGAN), 39–40 (DI), 77–78 (DV), and N104 each bind NAD(+). S153 contacts substrate. Catalysis depends on Y170, which acts as the Proton acceptor. NAD(+)-binding positions include K174 and 203–205 (VDT).

The protein belongs to the short-chain dehydrogenases/reductases (SDR) family.

This is an uncharacterized protein from Mycobacterium tuberculosis (strain CDC 1551 / Oshkosh).